The chain runs to 2193 residues: Genome polyprotein (2193 aa).

Residue G2 is the site of N-myristoyl glycine; by host attachment. The Cytoplasmic portion of the chain corresponds to 2-1503; it reads GAQVSTQKTG…HVSRAFICLQ (1502 aa). Positions 565-582 are amphipathic alpha-helix; that stretch reads QLLQGDVEEAVNRAVARV. Active-site for protease 2A activity residues include H880 and D898. The Zn(2+) site is built by C915 and C917. C969 functions as the For protease 2A activity in the catalytic mechanism. Zn(2+) is bound by residues C975 and H977. Positions 1109–1181 are membrane-binding; the sequence is SNGWLKKFTE…EQSAPSQSDQ (73 aa). Residues 1109–1247 form an oligomerization region; that stretch reads SNGWLKKFTE…SPGAGKSVAT (139 aa). Residues 1130 to 1134 form an RNA-binding region; it reads AIKIQ. In terms of domain architecture, SF3 helicase spans 1213–1369; the sequence is EKKMSNYIQF…SMYSQNGKIN (157 aa). 3 residues coordinate Zn(2+): C1377, C1389, and C1394. Residues 1377–1394 form a C4-type; degenerate zinc finger; it reads CDEECCPVNFKRCCPLVC. An RNA-binding region spans residues 1421-1428; sequence EYNHRHSV. Positions 1432 to 1437 are oligomerization; sequence LEALFQ. The stretch at 1504 to 1519 is an intramembrane region; it reads ALTTFVSVAGIIYIIY. Residues 1520–2193 lie on the Cytoplasmic side of the membrane; the sequence is KLFAGFQGAY…TLRRKWLDSF (674 aa). Position 1529 is an O-(5'-phospho-RNA)-tyrosine (Y1529). In terms of domain architecture, Peptidase C3 spans 1549 to 1727; it reads GPAFEFAVAM…FSAALLRHYF (179 aa). Active-site for protease 3C activity residues include H1588, E1619, and C1695. One can recognise a RdRp catalytic domain in the interval 1958–2074; that stretch reads GHLIAFDYSG…SYPWPIDASL (117 aa). Mg(2+)-binding residues include D1964 and D2060.

The protein belongs to the picornaviruses polyprotein family. As to quaternary structure, interacts with capsid protein VP1 and capsid protein VP3 to form heterotrimeric protomers. Interacts with capsid protein VP0, and capsid protein VP3 to form heterotrimeric protomers. Five protomers subsequently associate to form pentamers which serve as building blocks for the capsid. Interacts with capsid protein VP2, capsid protein VP3 and capsid protein VP4 following cleavage of capsid protein VP0. In terms of assembly, interacts with capsid protein VP1 and capsid protein VP3 in the mature capsid. Interacts with host CD55; this interaction promotes virus attachment to the host cell and subsequent internalization. As to quaternary structure, interacts with capsid protein VP0 and capsid protein VP1 to form heterotrimeric protomers. Five protomers subsequently associate to form pentamers which serve as building blocks for the capsid. Interacts with capsid protein VP4 in the mature capsid. Interacts with protein 2C; this interaction may be important for virion morphogenesis. Interacts with host CD55; this interaction promotes virus attachment to the host cell and subsequent internalization. Interacts with capsid protein VP1 and capsid protein VP3. In terms of assembly, homodimer. As to quaternary structure, homohexamer; forms a hexameric ring structure with 6-fold symmetry characteristic of AAA+ ATPases. Interacts (via N-terminus) with host RTN3 (via reticulon domain); this interaction is important for viral replication. Interacts with capsid protein VP3; this interaction may be important for virion morphogenesis. Interacts with protein 3CD. In terms of assembly, homodimer. Interacts with host GBF1. Interacts (via GOLD domain) with host ACBD3 (via GOLD domain); this interaction allows the formation of a viral protein 3A/ACBD3 heterotetramer with a 2:2 stoichiometry, which will stimulate the recruitment of host PI4KB in order to synthesize PI4P at the viral RNA replication sites. As to quaternary structure, interacts with RNA-directed RNA polymerase. Interacts with protein 3AB and with RNA-directed RNA polymerase. In terms of assembly, interacts with Viral protein genome-linked and with protein 3CD. It depends on Mg(2+) as a cofactor. Post-translationally, specific enzymatic cleavages in vivo by the viral proteases yield processing intermediates and the mature proteins. In terms of processing, myristoylation is required for the formation of pentamers during virus assembly. Further assembly of 12 pentamers and a molecule of genomic RNA generates the provirion. During virion maturation, immature virions are rendered infectious following cleavage of VP0 into VP4 and VP2. This maturation seems to be an autocatalytic event triggered by the presence of RNA in the capsid and it is followed by a conformational change infectious virion. Post-translationally, myristoylation is required during RNA encapsidation and formation of the mature virus particle. In terms of processing, VPg is uridylylated by the polymerase into VPg-pUpU. This acts as a nucleotide-peptide primer for the genomic RNA replication.

It is found in the virion. The protein resides in the host cytoplasm. Its subcellular location is the host cytoplasmic vesicle membrane. The protein localises to the host nucleus. It catalyses the reaction a ribonucleoside 5'-triphosphate + H2O = a ribonucleoside 5'-diphosphate + phosphate + H(+). The enzyme catalyses Selective cleavage of Tyr-|-Gly bond in the picornavirus polyprotein.. The catalysed reaction is RNA(n) + a ribonucleoside 5'-triphosphate = RNA(n+1) + diphosphate. It carries out the reaction Selective cleavage of Gln-|-Gly bond in the poliovirus polyprotein. In other picornavirus reactions Glu may be substituted for Gln, and Ser or Thr for Gly.. With respect to regulation, replication or transcription is subject to high level of random mutations by the nucleotide analog ribavirin. Forms an icosahedral capsid of pseudo T=3 symmetry with capsid proteins VP2 and VP3. The capsid is 300 Angstroms in diameter, composed of 60 copies of each capsid protein and enclosing the viral positive strand RNA genome. Capsid protein VP1 mainly forms the vertices of the capsid. Capsid protein VP1 interacts with host cell receptor to provide virion attachment to target host cells. This attachment induces virion internalization. Tyrosine kinases are probably involved in the entry process. After binding to its receptor, the capsid undergoes conformational changes. Capsid protein VP1 N-terminus (that contains an amphipathic alpha-helix) and capsid protein VP4 are externalized. Together, they shape a pore in the host membrane through which viral genome is translocated to host cell cytoplasm. Functionally, forms an icosahedral capsid of pseudo T=3 symmetry with capsid proteins VP2 and VP3. The capsid is 300 Angstroms in diameter, composed of 60 copies of each capsid protein and enclosing the viral positive strand RNA genome. In terms of biological role, lies on the inner surface of the capsid shell. After binding to the host receptor, the capsid undergoes conformational changes. Capsid protein VP4 is released, Capsid protein VP1 N-terminus is externalized, and together, they shape a pore in the host membrane through which the viral genome is translocated into the host cell cytoplasm. Its function is as follows. Component of immature procapsids, which is cleaved into capsid proteins VP4 and VP2 after maturation. Allows the capsid to remain inactive before the maturation step. Cysteine protease that cleaves viral polyprotein and specific host proteins. It is responsible for the autocatalytic cleavage between the P1 and P2 regions, which is the first cleavage occurring in the polyprotein. Also cleaves the host translation initiation factor EIF4G1, in order to shut down the capped cellular mRNA translation. Inhibits the host nucleus-cytoplasm protein and RNA trafficking by cleaving host members of the nuclear pores. Counteracts stress granule formation probably by antagonizing its assembly or promoting its dissassembly. Functionally, plays an essential role in the virus replication cycle by acting as a viroporin. Creates a pore in the host endoplasmic reticulum and as a consequence releases Ca2+ in the cytoplasm of infected cell. In turn, high levels of cytoplasmic calcium may trigger membrane trafficking and transport of viral ER-associated proteins to viroplasms, sites of viral genome replication. In terms of biological role, induces and associates with structural rearrangements of intracellular membranes. Displays RNA-binding, nucleotide binding and NTPase activities. May play a role in virion morphogenesis and viral RNA encapsidation by interacting with the capsid protein VP3. Its function is as follows. Localizes the viral replication complex to the surface of membranous vesicles. Together with protein 3CD binds the Cis-Active RNA Element (CRE) which is involved in RNA synthesis initiation. Acts as a cofactor to stimulate the activity of 3D polymerase, maybe through a nucleid acid chaperone activity. Localizes the viral replication complex to the surface of membranous vesicles. It inhibits host cell endoplasmic reticulum-to-Golgi apparatus transport and causes the disassembly of the Golgi complex, possibly through GBF1 interaction. This would result in depletion of MHC, trail receptors and IFN receptors at the host cell surface. Plays an essential role in viral RNA replication by recruiting ACBD3 and PI4KB at the viral replication sites, thereby allowing the formation of the rearranged membranous structures where viral replication takes place. Functionally, acts as a primer for viral RNA replication and remains covalently bound to viral genomic RNA. VPg is uridylylated prior to priming replication into VPg-pUpU. The oriI viral genomic sequence may act as a template for this. The VPg-pUpU is then used as primer on the genomic RNA poly(A) by the RNA-dependent RNA polymerase to replicate the viral genome. During genome replication, the VPg-RNA linkage is removed by the host TDP2, thereby accelerating replication. During the late stage of the replication cycle, host TDP2 is excluded from sites of viral RNA synthesis and encapsidation, allowing for the generation of progeny virions. In terms of biological role, involved in the viral replication complex and viral polypeptide maturation. It exhibits protease activity with a specificity and catalytic efficiency that is different from protease 3C. Protein 3CD lacks polymerase activity. Protein 3CD binds to the 5'UTR of the viral genome. Its function is as follows. Replicates the viral genomic RNA on the surface of intracellular membranes. May form linear arrays of subunits that propagate along a strong head-to-tail interaction called interface-I. Covalently attaches UMP to a tyrosine of VPg, which is used to prime RNA synthesis. The positive stranded RNA genome is first replicated at virus induced membranous vesicles, creating a dsRNA genomic replication form. This dsRNA is then used as template to synthesize positive stranded RNA genomes. ss(+)RNA genomes are either translated, replicated or encapsidated. Major viral protease that mediates proteolytic processing of the polyprotein. Cleaves host EIF5B, contributing to host translation shutoff. Also cleaves host PABPC1, contributing to host translation shutoff. Cleaves host NLRP1, triggers host N-glycine-mediated degradation of the autoinhibitory NLRP1 N-terminal fragment. The sequence is that of Genome polyprotein from Echovirus 12 (strain Travis).